Reading from the N-terminus, the 475-residue chain is Ribulose bisphosphate carboxylase large chain (475 aa).

Positions 1–2 (MS) are excised as a propeptide. An N-acetylproline modification is found at proline 3. Lysine 14 carries the N6,N6,N6-trimethyllysine modification. Substrate is bound by residues asparagine 123 and threonine 173. Residue lysine 175 is the Proton acceptor of the active site. Lysine 177 lines the substrate pocket. Mg(2+) contacts are provided by lysine 201, aspartate 203, and glutamate 204. Lysine 201 bears the N6-carboxylysine mark. Residue histidine 294 is the Proton acceptor of the active site. Arginine 295, histidine 327, and serine 379 together coordinate substrate.

Belongs to the RuBisCO large chain family. Type I subfamily. In terms of assembly, heterohexadecamer of 8 large chains and 8 small chains; disulfide-linked. The disulfide link is formed within the large subunit homodimers. Mg(2+) is required as a cofactor. In terms of processing, the disulfide bond which can form in the large chain dimeric partners within the hexadecamer appears to be associated with oxidative stress and protein turnover.

Its subcellular location is the plastid. It localises to the chloroplast. The catalysed reaction is 2 (2R)-3-phosphoglycerate + 2 H(+) = D-ribulose 1,5-bisphosphate + CO2 + H2O. It carries out the reaction D-ribulose 1,5-bisphosphate + O2 = 2-phosphoglycolate + (2R)-3-phosphoglycerate + 2 H(+). Its function is as follows. RuBisCO catalyzes two reactions: the carboxylation of D-ribulose 1,5-bisphosphate, the primary event in carbon dioxide fixation, as well as the oxidative fragmentation of the pentose substrate in the photorespiration process. Both reactions occur simultaneously and in competition at the same active site. The protein is Ribulose bisphosphate carboxylase large chain of Amaranthus tricolor (Joseph's coat).